Reading from the N-terminus, the 143-residue chain is Large ribosomal subunit protein uL16c (143 aa).

The protein belongs to the universal ribosomal protein uL16 family. Part of the 50S ribosomal subunit.

The protein resides in the plastid. The protein localises to the chloroplast. In Spirogyra maxima (Green alga), this protein is Large ribosomal subunit protein uL16c.